Here is a 329-residue protein sequence, read N- to C-terminus: MYG1 protein (329 aa).

The protein belongs to the MYG1 family.

The protein is MYG1 protein of Dictyostelium discoideum (Social amoeba).